Consider the following 381-residue polypeptide: Estradiol 17-beta-dehydrogenase 2 (381 aa).

The chain crosses the membrane as a helical; Signal-anchor for type II membrane protein span at residues 4 to 24; the sequence is FASESAWLCLAAAAVLGGTLL. An NAD(+)-binding site is contributed by 83–112; it reads QKAVLVTGADSGFGHGLAKHLDKLGFTVFA. Residue Ser220 coordinates substrate. The Proton acceptor role is filled by Tyr233.

Belongs to the short-chain dehydrogenases/reductases (SDR) family. In terms of assembly, homodimer.

The protein localises to the endoplasmic reticulum membrane. It carries out the reaction 17beta-estradiol + NAD(+) = estrone + NADH + H(+). It catalyses the reaction testosterone + NAD(+) = androst-4-ene-3,17-dione + NADH + H(+). The catalysed reaction is 17beta-hydroxy-5alpha-androstan-3-one + NAD(+) = 5alpha-androstan-3,17-dione + NADH + H(+). The enzyme catalyses (20S)-hydroxypregn-4-en-3-one + NAD(+) = progesterone + NADH + H(+). In terms of biological role, catalyzes the NAD-dependent oxidation of highly active 17beta-hydroxysteroids, such as estradiol (E2), testosterone (T), and dihydrotestosterone (DHT), to their less active forms and thus regulates the biological potency of these steroids. Oxidizes estradiol to estrone, testosterone to androstenedione, and dihydrotestosterone to 5alpha-androstan-3,17-dione. Also has 20-alpha-HSD activity. In Mus musculus (Mouse), this protein is Estradiol 17-beta-dehydrogenase 2 (Hsd17b2).